We begin with the raw amino-acid sequence, 153 residues long: Transcription antitermination protein NusB (153 aa).

The protein belongs to the NusB family.

In terms of biological role, involved in transcription antitermination. Required for transcription of ribosomal RNA (rRNA) genes. Binds specifically to the boxA antiterminator sequence of the ribosomal RNA (rrn) operons. This chain is Transcription antitermination protein NusB, found in Symbiobacterium thermophilum (strain DSM 24528 / JCM 14929 / IAM 14863 / T).